The following is a 375-amino-acid chain: Queuine tRNA-ribosyltransferase (375 aa).

Asp89 functions as the Proton acceptor in the catalytic mechanism. Residues 89–93 (DSGGF), Asp143, Gln187, and Gly214 contribute to the substrate site. Residues 245-251 (GVGKPED) form an RNA binding region. The active-site Nucleophile is Asp264. The RNA binding; important for wobble base 34 recognition stretch occupies residues 269 to 273 (TRNAR). Zn(2+)-binding residues include Cys302, Cys304, Cys307, and His333.

Belongs to the queuine tRNA-ribosyltransferase family. Homodimer. Within each dimer, one monomer is responsible for RNA recognition and catalysis, while the other monomer binds to the replacement base PreQ1. The cofactor is Zn(2+).

The enzyme catalyses 7-aminomethyl-7-carbaguanine + guanosine(34) in tRNA = 7-aminomethyl-7-carbaguanosine(34) in tRNA + guanine. The protein operates within tRNA modification; tRNA-queuosine biosynthesis. In terms of biological role, catalyzes the base-exchange of a guanine (G) residue with the queuine precursor 7-aminomethyl-7-deazaguanine (PreQ1) at position 34 (anticodon wobble position) in tRNAs with GU(N) anticodons (tRNA-Asp, -Asn, -His and -Tyr). Catalysis occurs through a double-displacement mechanism. The nucleophile active site attacks the C1' of nucleotide 34 to detach the guanine base from the RNA, forming a covalent enzyme-RNA intermediate. The proton acceptor active site deprotonates the incoming PreQ1, allowing a nucleophilic attack on the C1' of the ribose to form the product. After dissociation, two additional enzymatic reactions on the tRNA convert PreQ1 to queuine (Q), resulting in the hypermodified nucleoside queuosine (7-(((4,5-cis-dihydroxy-2-cyclopenten-1-yl)amino)methyl)-7-deazaguanosine). This Aliivibrio salmonicida (strain LFI1238) (Vibrio salmonicida (strain LFI1238)) protein is Queuine tRNA-ribosyltransferase.